The sequence spans 215 residues: Wtf element wtf7 (215 aa).

The interval 1-21 (MSGSYAPIEDSADELSVHSGN) is disordered. The next 3 helical transmembrane spans lie at 119-139 (LAQS…CLFF), 149-169 (LMGW…SFIL), and 189-209 (LILF…YALY).

It belongs to the WTF family.

It localises to the spore membrane. May act in meiotic drive. This chain is Wtf element wtf7, found in Schizosaccharomyces pombe (strain 972 / ATCC 24843) (Fission yeast).